We begin with the raw amino-acid sequence, 119 residues long: Small ribosomal subunit protein uS10 (119 aa).

A2 is modified (N-acetylalanine). K4 participates in a covalent cross-link: Glycyl lysine isopeptide (Lys-Gly) (interchain with G-Cter in ubiquitin). Position 8 is an N6-succinyllysine; alternate (K8). K8 is covalently cross-linked (Glycyl lysine isopeptide (Lys-Gly) (interchain with G-Cter in ubiquitin); alternate). Phosphothreonine is present on T9. 2 positions are modified to N6-acetyllysine: K34 and K75. S93 carries the phosphoserine modification.

This sequence belongs to the universal ribosomal protein uS10 family. Component of the 40S small ribosomal subunit. Polyubiquitinated by ZNF598 via 'Lys-63'-linked ubiquitin chains when a ribosome has stalled, initiating the ribosome quality control (RQC) pathway to degrade the potentially detrimental aberrant nascent polypeptide. Deubiquitinated by OTUD3 and USP21, antagonizing ZNF598 activity. Post-translationally, ufmylated by UFL1.

It is found in the cytoplasm. Functionally, component of the small ribosomal subunit. The ribosome is a large ribonucleoprotein complex responsible for the synthesis of proteins in the cell. The protein is Small ribosomal subunit protein uS10 (RPS20) of Pongo abelii (Sumatran orangutan).